Consider the following 1171-residue polypeptide: ATP-dependent helicase/deoxyribonuclease subunit B (1171 aa).

The 287-residue stretch at 1 to 287 folds into the UvrD-like helicase ATP-binding domain; that stretch reads MSLRFVIGRA…IPLMEQPRFH (287 aa). 8–15 serves as a coordination point for ATP; it reads GRAGSGKS. A UvrD-like helicase C-terminal domain is found at 281–587; the sequence is MEQPRFHSPA…QFANIPPSLD (307 aa). Cys805, Cys1129, Cys1132, and Cys1138 together coordinate [4Fe-4S] cluster.

It belongs to the helicase family. AddB/RexB type 1 subfamily. As to quaternary structure, heterodimer of AddA and AddB. Mg(2+) is required as a cofactor. It depends on [4Fe-4S] cluster as a cofactor.

Its function is as follows. The heterodimer acts as both an ATP-dependent DNA helicase and an ATP-dependent, dual-direction single-stranded exonuclease. Recognizes the chi site generating a DNA molecule suitable for the initiation of homologous recombination. The AddB subunit has 5' -&gt; 3' nuclease activity but not helicase activity. This is ATP-dependent helicase/deoxyribonuclease subunit B from Bacillus cereus (strain G9842).